Here is a 429-residue protein sequence, read N- to C-terminus: DNA polymerase delta small subunit (429 aa).

It belongs to the DNA polymerase delta/II small subunit family. In terms of assembly, heterodimer with subunits of 125 kDa and 50 kDa.

It localises to the nucleus. The catalysed reaction is DNA(n) + a 2'-deoxyribonucleoside 5'-triphosphate = DNA(n+1) + diphosphate. Its function is as follows. The function of the small subunit is not yet clear. This Oryza sativa subsp. japonica (Rice) protein is DNA polymerase delta small subunit (POLD2).